Reading from the N-terminus, the 315-residue chain is 2-oxoglutarate and iron-dependent oxygenase domain-containing protein 3 (315 aa).

A disordered region spans residues 1–32 (MAPQRRGPPRVPEGNSAAERRHANSTKKDRLP). Over 1 to 41 (MAPQRRGPPRVPEGNSAAERRHANSTKKDRLPQEAQRTWLR) the chain is Cytoplasmic. A compositionally biased stretch (basic and acidic residues) spans 18 to 32 (AERRHANSTKKDRLP). A helical; Signal-anchor for type II membrane protein membrane pass occupies residues 42 to 62 (IVALGVSLALVTFLLWSSAGI). At 63 to 315 (DDDVAEVVAH…DHGIEDPVLT (253 aa)) the chain is on the lumenal side. Positions 203 to 305 (KPTFFSRINS…AITIAFTCNP (103 aa)) constitute a Fe2OG dioxygenase domain. N-linked (GlcNAc...) asparagine glycosylation occurs at Asn-211. His-226 and Asp-228 together coordinate Fe cation. The N-linked (GlcNAc...) asparagine glycan is linked to Asn-263. Residue His-284 coordinates Fe cation. Arg-294 is an active-site residue. Arg-294 serves as a coordination point for 2-oxoglutarate.

The protein belongs to the OGFOD3 family. It depends on Fe(2+) as a cofactor. L-ascorbate serves as cofactor.

It localises to the membrane. In Rattus norvegicus (Rat), this protein is 2-oxoglutarate and iron-dependent oxygenase domain-containing protein 3 (Ogfod3).